We begin with the raw amino-acid sequence, 145 residues long: Venom protein 30.1 (145 aa).

An N-terminal signal peptide occupies residues 1-18; sequence MIIVKLFTCLLMVSSVLT.

Contains 5 disulfide bonds. Expressed by the venom gland.

It is found in the secreted. The polypeptide is Venom protein 30.1 (Lychas mucronatus (Chinese swimming scorpion)).